A 72-amino-acid chain; its full sequence is Translation initiation factor IF-1 (72 aa).

The S1-like domain maps to 1–72 (MSKDDVIEMQ…TRGRITWRAK (72 aa)).

Belongs to the IF-1 family. As to quaternary structure, component of the 30S ribosomal translation pre-initiation complex which assembles on the 30S ribosome in the order IF-2 and IF-3, IF-1 and N-formylmethionyl-tRNA(fMet); mRNA recruitment can occur at any time during PIC assembly.

Its subcellular location is the cytoplasm. Functionally, one of the essential components for the initiation of protein synthesis. Stabilizes the binding of IF-2 and IF-3 on the 30S subunit to which N-formylmethionyl-tRNA(fMet) subsequently binds. Helps modulate mRNA selection, yielding the 30S pre-initiation complex (PIC). Upon addition of the 50S ribosomal subunit IF-1, IF-2 and IF-3 are released leaving the mature 70S translation initiation complex. The polypeptide is Translation initiation factor IF-1 (Clostridium kluyveri (strain ATCC 8527 / DSM 555 / NBRC 12016 / NCIMB 10680 / K1)).